Reading from the N-terminus, the 543-residue chain is Excitatory amino acid transporter 1 (543 aa).

The Cytoplasmic segment spans residues 1 to 47 (MTKSNGEDPRAGSRMERFQQGVRQRTLLAKKKVQNITKDDVKGFLKR). Residues 48 to 68 (NGFVLFTVIAVVVGSILGFSV) traverse the membrane as a helical segment. The Extracellular portion of the chain corresponds to 69–86 (RSYHMTFRELKYFSFPGE). Residues 87 to 108 (LLMRMLQMLVLPLIVSSLVTGM) form a helical membrane-spanning segment. At 109–122 (AALDSKASGKMGLR) the chain is on the cytoplasmic side. A helical membrane pass occupies residues 123-145 (AVVYYMTTTVIAVFIGIVIVIIV). Over 146–237 (HPGKGTKEHM…MREEMIPVPG (92 aa)) the chain is Extracellular. N-linked (GlcNAc...) asparagine glycans are attached at residues Asn206 and Asn217. A helical membrane pass occupies residues 238-261 (AVNGVNALGLVVFSMCFGLVIGNM). Residues 262 to 270 (KEQGKALKD) are Cytoplasmic-facing. Residues 271–298 (FFDSLNEAIMRLVAVIMWYAPIGILFLI) traverse the membrane as a helical segment. Residues 299–319 (AGKIAEMEDMGVVGGQLGMYT) lie on the Extracellular side of the membrane. Residues 320 to 341 (VTVIIGLLIHAVIVLPLLYFAV) traverse the membrane as a helical segment. Topologically, residues 342 to 346 (TRKNP) are cytoplasmic. Positions 347-377 (WVFIGGILQALITALGTSSSSATLPITFKCL) form an intramembrane region, discontinuously helical. An L-aspartate-binding site is contributed by 364-366 (SSS). Over 378–386 (EENNKVDKR) the chain is Cytoplasmic. Residues 387 to 413 (VTRFVLPVGATINMDGTALYEALAAIF) form a helical membrane-spanning segment. Na(+)-binding residues include Gly395, Thr397, and Asn399. Thr403 is an L-aspartate binding site. At 414-426 (IAQVNNYDLNFGQ) the chain is on the extracellular side. An intramembrane region (discontinuously helical) is located at residues 427 to 460 (ILTISITATAASIGAAGIPQAGLVTMVIVLTSVG). Position 444–448 (444–448 (IPQAG)) interacts with L-aspartate. Over 461–473 (LPTDDITLIIAVD) the chain is Extracellular. Residues 474–495 (WFLDRLRTTTNVLGDSLGAGIV) form a helical membrane-spanning segment. The L-aspartate site is built by Asp477 and Asn484. Residues Asn484 and Asp488 each contribute to the Na(+) site. The Cytoplasmic segment spans residues 496 to 543 (EHLSRHELQSGDAEMGNSVIEENEMKKPYQLVSQENELEKPIDSETKM). The segment at 521-543 (KKPYQLVSQENELEKPIDSETKM) is disordered. Residues 532–543 (ELEKPIDSETKM) show a composition bias toward basic and acidic residues.

It belongs to the dicarboxylate/amino acid:cation symporter (DAACS) (TC 2.A.23) family. As to quaternary structure, homotrimer. Detected in retina (at protein level).

The protein localises to the cell membrane. It catalyses the reaction K(+)(in) + L-glutamate(out) + 3 Na(+)(out) + H(+)(out) = K(+)(out) + L-glutamate(in) + 3 Na(+)(in) + H(+)(in). The catalysed reaction is K(+)(in) + L-aspartate(out) + 3 Na(+)(out) + H(+)(out) = K(+)(out) + L-aspartate(in) + 3 Na(+)(in) + H(+)(in). It carries out the reaction D-aspartate(out) + K(+)(in) + 3 Na(+)(out) + H(+)(out) = D-aspartate(in) + K(+)(out) + 3 Na(+)(in) + H(+)(in). Functionally, sodium-dependent, high-affinity amino acid transporter that mediates the uptake of L-glutamate and also L-aspartate and D-aspartate. Functions as a symporter that transports one amino acid molecule together with two or three Na(+) ions and one proton, in parallel with the counter-transport of one K(+) ion. Plays a redundant role in the rapid removal of released glutamate from the synaptic cleft, which is essential for terminating the postsynaptic action of glutamate. The sequence is that of Excitatory amino acid transporter 1 (SLC1A3) from Ambystoma tigrinum (Eastern tiger salamander).